Reading from the N-terminus, the 210-residue chain is SAP domain-containing ribonucleoprotein (210 aa).

Ala2 is subject to N-acetylalanine. Residues 8-42 enclose the SAP domain; sequence LHKLKLAELKQECLARGLETKGIKQDLINRLQAYL. Lys10 carries the N6-acetyllysine modification. Acidic residues predominate over residues 45–64; the sequence is HAEEEANEEDVLGDETEEEE. The disordered stretch occupies residues 45–87; sequence HAEEEANEEDVLGDETEEEEPKPIELPVKEEEPPEKAVDMASE. Positions 65-87 are enriched in basic and acidic residues; sequence PKPIELPVKEEEPPEKAVDMASE. Lys142 is modified (N6-acetyllysine). A disordered region spans residues 162–210; the sequence is SSISRKSEDDEKLKKRKERFGIVTSSAGTGTTEDTEAKKRKRAERFGIA. The residue at position 163 (Ser163) is a Phosphoserine. Residues 184–193 show a composition bias toward polar residues; that stretch reads VTSSAGTGTT.

The protein belongs to the SAP domain-containing ribonucleoprotein family. As to quaternary structure, interacts with DDX39A. Interacts with FUS. Interacts (via the C-terminal domain) with DDX39B; the interaction is direct and facilitates RNA binding of DDX39B. Component of the transcription/export (TREX) complex at least composed of ALYREF/THOC4, DDX39B, SARNP/CIP29, CHTOP and the THO subcomplex; TREX seems to have dynamic structure involving ATP-dependent remodeling; in the complex interacts directly with DDX39B in a ATP-dependent manner which bridges it to ALYREF/THOC4.

The protein localises to the nucleus. It localises to the nucleus speckle. In terms of biological role, binds both single-stranded and double-stranded DNA with higher affinity for the single-stranded form. Specifically binds to scaffold/matrix attachment region DNA. Also binds single-stranded RNA. Enhances RNA unwinding activity of DDX39A. May participate in important transcriptional or translational control of cell growth, metabolism and carcinogenesis. Component of the TREX complex which is thought to couple mRNA transcription, processing and nuclear export, and specifically associates with spliced mRNA and not with unspliced pre-mRNA. The TREX complex is recruited to spliced mRNAs by a transcription-independent mechanism, binds to mRNA upstream of the exon-junction complex (EJC) and is recruited in a splicing- and cap-dependent manner to a region near the 5' end of the mRNA where it functions in mRNA export to the cytoplasm via the TAP/NXF1 pathway. Associates with DDX39B, which facilitates RNA binding of DDX39B and likely plays a role in mRNA export. This Mus musculus (Mouse) protein is SAP domain-containing ribonucleoprotein (Sarnp).